A 149-amino-acid chain; its full sequence is Envelope glycoprotein UL4 (149 aa).

Residues 1-18 (MMLRTWISLPMVLLDAYC) form the signal peptide. Asn-46, Asn-51, Asn-59, Asn-67, Asn-105, Asn-109, Asn-119, Asn-136, and Asn-145 each carry an N-linked (GlcNAc...) asparagine; by host glycan.

This sequence belongs to the RL11 family. In terms of processing, N-glycosylated and possibly O-glycosylated.

It localises to the virion membrane. This Human cytomegalovirus (strain Merlin) (HHV-5) protein is Envelope glycoprotein UL4 (UL4).